A 208-amino-acid polypeptide reads, in one-letter code: Large ribosomal subunit protein uL3 (208 aa).

Residues 130 to 168 (GGSKTHGQSDRLRAPGSVGGSSFPSRTFKGQRMAGRKGS) form a disordered region.

Belongs to the universal ribosomal protein uL3 family. As to quaternary structure, part of the 50S ribosomal subunit. Forms a cluster with proteins L14 and L19.

Functionally, one of the primary rRNA binding proteins, it binds directly near the 3'-end of the 23S rRNA, where it nucleates assembly of the 50S subunit. The polypeptide is Large ribosomal subunit protein uL3 (Chloroherpeton thalassium (strain ATCC 35110 / GB-78)).